The sequence spans 294 residues: Elongation factor Ts (294 aa).

Residues 82-85 (TDFV) are involved in Mg(2+) ion dislocation from EF-Tu.

This sequence belongs to the EF-Ts family.

The protein resides in the cytoplasm. Associates with the EF-Tu.GDP complex and induces the exchange of GDP to GTP. It remains bound to the aminoacyl-tRNA.EF-Tu.GTP complex up to the GTP hydrolysis stage on the ribosome. In Psychrobacter cryohalolentis (strain ATCC BAA-1226 / DSM 17306 / VKM B-2378 / K5), this protein is Elongation factor Ts.